We begin with the raw amino-acid sequence, 442 residues long: MDHVIGGKFKLGRKIGSGSFGELYIGINVQTGEEVALKLEPVKTKHPQLHYESKVYMLLQGGTGVPHIKWFGVEGNYNCMAIDLLGPSLEDLFNYCTRSFSLKTVLMLADQLINRVEYMHSRGFLHRDIKPDNFLMGLGRKANQVYIIDYGLAKKYRDLQTHKHIPYRENKNLTGTARYASVNTHLGIEQSRRDDLESLGYVLMYFIRGSLPWQGLKAGTKKQKYEKISEKKMLTPVEVLCKSYPSEFTSYFHYCRSLRFEDKPDYSYLKRLFRDLFIREGYQFDYVFDWTILKYPQSGSISKPRPNPKPALDPPGPSAERNEKPIVGQDLRERFSGAVEAFARRNVPSHGIRPKHIFSDDASKEVQVSEKTRNEIATKMAVMSSSQPGSSGELSENRSSKLFSSSAQKIQPVQETKLSARLGRDDGLRSFDMLTIGSGKRK.

One can recognise a Protein kinase domain in the interval 9–278 (FKLGRKIGSG…LKRLFRDLFI (270 aa)). Residues 15–23 (IGSGSFGEL) and K38 each bind ATP. The active-site Proton acceptor is the D128. Disordered regions lie at residues 299 to 323 (GSISKPRPNPKPALDPPGPSAERNE) and 381 to 421 (AVMS…LSAR). A compositionally biased stretch (pro residues) spans 305 to 317 (RPNPKPALDPPGP). Low complexity predominate over residues 384 to 394 (SSSQPGSSGEL). Residues 400-417 (SKLFSSSAQKIQPVQETK) are compositionally biased toward polar residues.

Belongs to the protein kinase superfamily. CK1 Ser/Thr protein kinase family. Casein kinase I subfamily. Monomer. Post-translationally, autophosphorylated.

The protein resides in the cytoplasm. The protein localises to the cell junction. Its subcellular location is the plasmodesma. It carries out the reaction L-seryl-[protein] + ATP = O-phospho-L-seryl-[protein] + ADP + H(+). The enzyme catalyses L-threonyl-[protein] + ATP = O-phospho-L-threonyl-[protein] + ADP + H(+). Casein kinases are operationally defined by their preferential utilization of acidic proteins such as caseins as substrates. It can phosphorylate a large number of proteins. The chain is Casein kinase 1-like protein 10 from Arabidopsis thaliana (Mouse-ear cress).